Reading from the N-terminus, the 228-residue chain is Urease accessory protein UreF (228 aa).

Belongs to the UreF family. UreD, UreF and UreG form a complex that acts as a GTP-hydrolysis-dependent molecular chaperone, activating the urease apoprotein by helping to assemble the nickel containing metallocenter of UreC. The UreE protein probably delivers the nickel.

It localises to the cytoplasm. Required for maturation of urease via the functional incorporation of the urease nickel metallocenter. The protein is Urease accessory protein UreF of Yersinia pestis bv. Antiqua (strain Antiqua).